Reading from the N-terminus, the 316-residue chain is Transaldolase (316 aa).

K131 (schiff-base intermediate with substrate) is an active-site residue.

It belongs to the transaldolase family. Type 1 subfamily. As to quaternary structure, homodimer.

The protein localises to the cytoplasm. It catalyses the reaction D-sedoheptulose 7-phosphate + D-glyceraldehyde 3-phosphate = D-erythrose 4-phosphate + beta-D-fructose 6-phosphate. It participates in carbohydrate degradation; pentose phosphate pathway; D-glyceraldehyde 3-phosphate and beta-D-fructose 6-phosphate from D-ribose 5-phosphate and D-xylulose 5-phosphate (non-oxidative stage): step 2/3. Its function is as follows. Transaldolase is important for the balance of metabolites in the pentose-phosphate pathway. This chain is Transaldolase, found in Buchnera aphidicola subsp. Acyrthosiphon pisum (strain 5A).